A 321-amino-acid polypeptide reads, in one-letter code: NADH-ubiquinone oxidoreductase chain 1 (321 aa).

8 consecutive transmembrane segments (helical) span residues 7–27 (ITNS…LTLM), 73–93 (ILLI…WTPI), 104–124 (LGLL…LWAG), 148–168 (VTLG…TMQL), 175–195 (HTWL…STLA), 227–247 (FFLA…ILFI), 256–276 (ELFL…FLWI), and 297–317 (LPLT…ISGI).

Belongs to the complex I subunit 1 family.

It localises to the mitochondrion inner membrane. It carries out the reaction a ubiquinone + NADH + 5 H(+)(in) = a ubiquinol + NAD(+) + 4 H(+)(out). Core subunit of the mitochondrial membrane respiratory chain NADH dehydrogenase (Complex I) that is believed to belong to the minimal assembly required for catalysis. Complex I functions in the transfer of electrons from NADH to the respiratory chain. The immediate electron acceptor for the enzyme is believed to be ubiquinone. In Varanus dumerilii (Dumeril's monitor), this protein is NADH-ubiquinone oxidoreductase chain 1 (MT-ND1).